The chain runs to 188 residues: Probable nicotinate-nucleotide adenylyltransferase (188 aa).

It belongs to the NadD family.

The enzyme catalyses nicotinate beta-D-ribonucleotide + ATP + H(+) = deamido-NAD(+) + diphosphate. It functions in the pathway cofactor biosynthesis; NAD(+) biosynthesis; deamido-NAD(+) from nicotinate D-ribonucleotide: step 1/1. Catalyzes the reversible adenylation of nicotinate mononucleotide (NaMN) to nicotinic acid adenine dinucleotide (NaAD). The protein is Probable nicotinate-nucleotide adenylyltransferase of Salinispora tropica (strain ATCC BAA-916 / DSM 44818 / JCM 13857 / NBRC 105044 / CNB-440).